The chain runs to 283 residues: Diaminopimelate epimerase (283 aa).

Substrate-binding residues include N13 and N66. C75 serves as the catalytic Proton donor. Substrate contacts are provided by residues 76–77, N165, N198, and 216–217; these read GN and ER. The active-site Proton acceptor is C225. Position 226–227 (226–227) interacts with substrate; sequence GT.

Belongs to the diaminopimelate epimerase family. Homodimer.

It is found in the cytoplasm. It carries out the reaction (2S,6S)-2,6-diaminopimelate = meso-2,6-diaminopimelate. Its pathway is amino-acid biosynthesis; L-lysine biosynthesis via DAP pathway; DL-2,6-diaminopimelate from LL-2,6-diaminopimelate: step 1/1. In terms of biological role, catalyzes the stereoinversion of LL-2,6-diaminopimelate (L,L-DAP) to meso-diaminopimelate (meso-DAP), a precursor of L-lysine and an essential component of the bacterial peptidoglycan. This is Diaminopimelate epimerase from Acaryochloris marina (strain MBIC 11017).